The sequence spans 1171 residues: ATP-dependent helicase/deoxyribonuclease subunit B (1171 aa).

In terms of domain architecture, UvrD-like helicase ATP-binding spans 1 to 390 (MSLRFVIGRA…HPLVECIRSA (390 aa)). 8-15 (GRAGSGKS) contributes to the ATP binding site. In terms of domain architecture, UvrD-like helicase C-terminal spans 281 to 587 (MEQPRFHSPA…QFANIPPSLD (307 aa)). [4Fe-4S] cluster-binding residues include cysteine 805, cysteine 1129, cysteine 1132, and cysteine 1138.

The protein belongs to the helicase family. AddB/RexB type 1 subfamily. Heterodimer of AddA and AddB. Requires Mg(2+) as cofactor. The cofactor is [4Fe-4S] cluster.

In terms of biological role, the heterodimer acts as both an ATP-dependent DNA helicase and an ATP-dependent, dual-direction single-stranded exonuclease. Recognizes the chi site generating a DNA molecule suitable for the initiation of homologous recombination. The AddB subunit has 5' -&gt; 3' nuclease activity but not helicase activity. This Bacillus cereus (strain ATCC 10987 / NRS 248) protein is ATP-dependent helicase/deoxyribonuclease subunit B.